The sequence spans 494 residues: Glucose-6-phosphate exchanger SLC37A2 (494 aa).

The helical transmembrane segment at 20–37 (YRFSILFLTFVFYTSYHL) threads the bilayer. 3 N-linked (GlcNAc...) asparagine glycosylation sites follow: N52, N63, and N67. Helical transmembrane passes span 85-105 (FGVLDNCFLVAYAVGMFFSGI), 116-136 (LSTGMLLSGLFTALFGLGFYW), 146-166 (LVQALNGLVQTTGWPAVVACV), 187-207 (SVGNILGSLIAGVYVSSAWGL), 208-228 (SFIVPGIIIASTGVICFLFLV), 295-315 (LCLLFAKLVSYTFLYWLPLYI), 327-347 (GDLSTLFDVGGILGGIVAGLV), 355-375 (ASTCCAMLIIAAPMLFLYNKI), 384-404 (VGMLLWCGALVNGPYALITTA), 427-447 (AIIDGTGSIGAAVGPLLAGLI), and 455-475 (VFYMLIAADVLACLLLSRLVY).

The protein belongs to the major facilitator superfamily. Organophosphate:Pi antiporter (OPA) (TC 2.A.1.4) family.

It is found in the endoplasmic reticulum membrane. The catalysed reaction is D-glucose 6-phosphate(in) + phosphate(out) = D-glucose 6-phosphate(out) + phosphate(in). Its function is as follows. Inorganic phosphate and glucose-6-phosphate antiporter. May transport cytoplasmic glucose-6-phosphate into the lumen of the endoplasmic reticulum and translocate inorganic phosphate into the opposite direction. This chain is Glucose-6-phosphate exchanger SLC37A2, found in Danio rerio (Zebrafish).